We begin with the raw amino-acid sequence, 203 residues long: Large ribosomal subunit protein bL25 (203 aa).

This sequence belongs to the bacterial ribosomal protein bL25 family. CTC subfamily. Part of the 50S ribosomal subunit; part of the 5S rRNA/L5/L18/L25 subcomplex. Contacts the 5S rRNA. Binds to the 5S rRNA independently of L5 and L18.

In terms of biological role, this is one of the proteins that binds to the 5S RNA in the ribosome where it forms part of the central protuberance. The polypeptide is Large ribosomal subunit protein bL25 (Pseudomonas savastanoi pv. phaseolicola (strain 1448A / Race 6) (Pseudomonas syringae pv. phaseolicola (strain 1448A / Race 6))).